A 312-amino-acid chain; its full sequence is Ribosomal RNA small subunit methyltransferase H (312 aa).

S-adenosyl-L-methionine contacts are provided by residues 33–35, Asp51, Phe78, Asp97, and Gln104; that span reads GGY.

Belongs to the methyltransferase superfamily. RsmH family.

It is found in the cytoplasm. It catalyses the reaction cytidine(1402) in 16S rRNA + S-adenosyl-L-methionine = N(4)-methylcytidine(1402) in 16S rRNA + S-adenosyl-L-homocysteine + H(+). Its function is as follows. Specifically methylates the N4 position of cytidine in position 1402 (C1402) of 16S rRNA. This Orientia tsutsugamushi (strain Boryong) (Rickettsia tsutsugamushi) protein is Ribosomal RNA small subunit methyltransferase H.